The sequence spans 394 residues: Probable purine permease 23 (394 aa).

A compositionally biased stretch (basic and acidic residues) spans 1–20 (MEMTEASKHTTTHEESEHVQ). Positions 1–24 (MEMTEASKHTTTHEESEHVQNPEP) are disordered. At serine 29 the chain carries Phosphoserine. 10 helical membrane passes run 43–63 (ISVL…ILLL), 85–105 (WMQA…FFIF), 124–144 (LILL…LYAL), 152–172 (GFFM…TAII), 180–200 (WIII…PVFS), 211–231 (GIQA…LCLV), 254–274 (VLEM…VGLF), 301–321 (VGLA…VLYV), 328–348 (IVHM…FDFI), and 352–372 (FSWP…SYFY).

It belongs to the purine permeases (TC 2.A.7.14) family.

The protein localises to the membrane. In Arabidopsis thaliana (Mouse-ear cress), this protein is Probable purine permease 23 (PUP23).